The chain runs to 492 residues: MTLWINGDWVTGQGALRVKRNPVSGEVLWQGNDADAAQVGQACRAARAAFPRWARLSFGDRQVRVERFAGLLESNKAELTAIIARETGKPRWEAATEVTAMINKIAISIKAYHIRTGEQRSEMPDGAASLRHRPHGVLAVFGPYNFPGHLPNGHIVPALLAGNTIIFKPSELTPWSGEAVMRLWQQAGLPPGVLNLVQGGRETGQALSALEDLDGLLFTGSANTGYQLHRQLSGQPEKILALEMGGNNPLIIDEVADIDAAVHLTIQSAFVTAGQRCTCARRLLLKSGAQGDAFLARLVAVSQRLTPGKWDDEPQPFIGGLISDQAAQQVVTAWQQLEAMGGRPLLAPCLLQAGTSLLTPGIIEMTGVAGVPDEEVFGPLLRVWRYDNFDEAIRMANNTRFGLSCGLVSPAREKFDQLLLEARAGIVNWNKPLTGAASTAPFGGIGASGNHRPSAWYAADYCAWPMASLESDSLTLPATLNPGLDFSDEVVR.

Position 220–225 (220–225 (GSANTG)) interacts with NAD(+). Catalysis depends on residues Glu243 and Cys277.

The protein belongs to the aldehyde dehydrogenase family. AstD subfamily.

The catalysed reaction is N-succinyl-L-glutamate 5-semialdehyde + NAD(+) + H2O = N-succinyl-L-glutamate + NADH + 2 H(+). The protein operates within amino-acid degradation; L-arginine degradation via AST pathway; L-glutamate and succinate from L-arginine: step 4/5. Catalyzes the NAD-dependent reduction of succinylglutamate semialdehyde into succinylglutamate. The polypeptide is N-succinylglutamate 5-semialdehyde dehydrogenase (Escherichia coli O17:K52:H18 (strain UMN026 / ExPEC)).